A 250-amino-acid polypeptide reads, in one-letter code: Ubiquinone/menaquinone biosynthesis C-methyltransferase UbiE (250 aa).

S-adenosyl-L-methionine is bound by residues T73, D94, 122–123, and S139; that span reads NA.

This sequence belongs to the class I-like SAM-binding methyltransferase superfamily. MenG/UbiE family.

It carries out the reaction a 2-demethylmenaquinol + S-adenosyl-L-methionine = a menaquinol + S-adenosyl-L-homocysteine + H(+). The enzyme catalyses a 2-methoxy-6-(all-trans-polyprenyl)benzene-1,4-diol + S-adenosyl-L-methionine = a 5-methoxy-2-methyl-3-(all-trans-polyprenyl)benzene-1,4-diol + S-adenosyl-L-homocysteine + H(+). The protein operates within quinol/quinone metabolism; menaquinone biosynthesis; menaquinol from 1,4-dihydroxy-2-naphthoate: step 2/2. It functions in the pathway cofactor biosynthesis; ubiquinone biosynthesis. Functionally, methyltransferase required for the conversion of demethylmenaquinol (DMKH2) to menaquinol (MKH2) and the conversion of 2-polyprenyl-6-methoxy-1,4-benzoquinol (DDMQH2) to 2-polyprenyl-3-methyl-6-methoxy-1,4-benzoquinol (DMQH2). This is Ubiquinone/menaquinone biosynthesis C-methyltransferase UbiE from Francisella philomiragia subsp. philomiragia (strain ATCC 25017 / CCUG 19701 / FSC 153 / O#319-036).